Here is a 450-residue protein sequence, read N- to C-terminus: Phosphoglucosamine mutase (450 aa).

Ser-104 functions as the Phosphoserine intermediate in the catalytic mechanism. Residues Ser-104, Asp-245, Asp-247, and Asp-249 each coordinate Mg(2+). Ser-104 is modified (phosphoserine).

It belongs to the phosphohexose mutase family. It depends on Mg(2+) as a cofactor. Activated by phosphorylation.

It carries out the reaction alpha-D-glucosamine 1-phosphate = D-glucosamine 6-phosphate. Its function is as follows. Catalyzes the conversion of glucosamine-6-phosphate to glucosamine-1-phosphate. The sequence is that of Phosphoglucosamine mutase from Phenylobacterium zucineum (strain HLK1).